Reading from the N-terminus, the 306-residue chain is Putative S-adenosyl-L-methionine-dependent methyltransferase MAV_4442 (306 aa).

S-adenosyl-L-methionine-binding positions include Asp-129 and 158 to 159; that span reads DL.

Belongs to the UPF0677 family.

Exhibits S-adenosyl-L-methionine-dependent methyltransferase activity. The polypeptide is Putative S-adenosyl-L-methionine-dependent methyltransferase MAV_4442 (Mycobacterium avium (strain 104)).